The sequence spans 252 residues: Isoprenyl transferase (252 aa).

The active site involves Asp-32. Mg(2+) is bound at residue Asp-32. Substrate-binding positions include 33–36 (GNGR), Trp-37, Arg-45, His-49, and 77–79 (STE). Residue Asn-80 is the Proton acceptor of the active site. Residues Trp-81, Arg-83, Arg-200, and 206–208 (RLS) contribute to the substrate site. Mg(2+) is bound at residue Glu-219.

Belongs to the UPP synthase family. As to quaternary structure, homodimer. Mg(2+) is required as a cofactor.

In terms of biological role, catalyzes the condensation of isopentenyl diphosphate (IPP) with allylic pyrophosphates generating different type of terpenoids. The polypeptide is Isoprenyl transferase (Listeria innocua serovar 6a (strain ATCC BAA-680 / CLIP 11262)).